The following is a 736-amino-acid chain: Subtilisin-like protease SBT4.11 (736 aa).

The first 25 residues, 1 to 25 (MAKRGAFSSFHSFLIVLLFLNSVLA), serve as a signal peptide directing secretion. Positions 26-113 (VTHGHQDKQV…VFPNKKLKLQ (88 aa)) are cleaved as a propeptide — activation peptide. In terms of domain architecture, Inhibitor I9 spans 35–112 (VYIVYMGSLP…SVFPNKKLKL (78 aa)). A Peptidase S8 domain is found at 117 to 579 (SWDFMGLKEG…AGHVDPIAAT (463 aa)). The active-site Charge relay system is Asp145. Asn176 carries N-linked (GlcNAc...) asparagine glycosylation. The active-site Charge relay system is His200. N-linked (GlcNAc...) asparagine glycosylation is found at Asn215 and Asn223. Residues 355-437 (KFPLVYGKSA…GLQKDDFESV (83 aa)) form the PA domain. The Charge relay system role is filled by Ser518. Asn555, Asn602, Asn638, Asn646, and Asn656 each carry an N-linked (GlcNAc...) asparagine glycan.

The protein belongs to the peptidase S8 family. In terms of processing, the C-terminal propeptide is autocleaved.

It is found in the secreted. This is Subtilisin-like protease SBT4.11 from Arabidopsis thaliana (Mouse-ear cress).